The following is a 408-amino-acid chain: Probable 2,3-bisphosphoglycerate-independent phosphoglycerate mutase (408 aa).

This sequence belongs to the BPG-independent phosphoglycerate mutase family. A-PGAM subfamily.

It catalyses the reaction (2R)-2-phosphoglycerate = (2R)-3-phosphoglycerate. Its pathway is carbohydrate degradation; glycolysis; pyruvate from D-glyceraldehyde 3-phosphate: step 3/5. Its function is as follows. Catalyzes the interconversion of 2-phosphoglycerate and 3-phosphoglycerate. The protein is Probable 2,3-bisphosphoglycerate-independent phosphoglycerate mutase of Deinococcus geothermalis (strain DSM 11300 / CIP 105573 / AG-3a).